A 446-amino-acid polypeptide reads, in one-letter code: MENISDLWNSALKELEKKVSKPSYETWLKSTTAHNLKKDVLTITAPNEFARDWLESHYSELISETLYDLTGAKLAIRFIIPQSQAEEEIDLPPAKPNAAQDDSNHLPQSMLNPKYTFDTFVIGSGNRFAHAASLAVAEAPAKAYNPLFIYGGVGLGKTHLMHAIGHYVIEHNPNAKVVYLSSEKFTNEFINSIRDNKAVDFRNKYRNVDVLLIDDIQFLAGKEQTQEEFFHTFNALHEESKQIVISSDRPPKEIPTLEDRLRSRFEWGLITDITPPDLETRIAILRKKAKAEGLDIPNEVMLYIANQIDSNIRELEGALIRVVAYSSLINKDINADLAAEALKDIIPNSKPKIISIYDIQKAVGDVYQVKLEDFKAKKRTKSVAFPRQIAMYLSRELTDSSLPKIGEEFGGRDHTTVIHAHEKISKLLKTDTQLQKQVEEINDILK.

Residues M1–P92 form a domain I, interacts with DnaA modulators region. The segment at P93–S109 is domain II. The tract at residues M110 to S326 is domain III, AAA+ region. Residues G154, G156, K157, and T158 each contribute to the ATP site. A domain IV, binds dsDNA region spans residues S327–K446.

The protein belongs to the DnaA family. In terms of assembly, oligomerizes as a right-handed, spiral filament on DNA at oriC.

The protein localises to the cytoplasm. Its function is as follows. Plays an essential role in the initiation and regulation of chromosomal replication. ATP-DnaA binds to the origin of replication (oriC) to initiate formation of the DNA replication initiation complex once per cell cycle. Binds the DnaA box (a 9 base pair repeat at the origin) and separates the double-stranded (ds)DNA. Forms a right-handed helical filament on oriC DNA; dsDNA binds to the exterior of the filament while single-stranded (ss)DNA is stabiized in the filament's interior. The ATP-DnaA-oriC complex binds and stabilizes one strand of the AT-rich DNA unwinding element (DUE), permitting loading of DNA polymerase. After initiation quickly degrades to an ADP-DnaA complex that is not apt for DNA replication. Binds acidic phospholipids. In Bacillus anthracis (strain A0248), this protein is Chromosomal replication initiator protein DnaA.